A 393-amino-acid chain; its full sequence is Ceramide synthase 4 (393 aa).

At 1-31 the chain is on the lumenal side; the sequence is MWSSLNDWLWNERLWLPANISWAQLEDHDGL. Asn-19 carries an N-linked (GlcNAc...) asparagine glycan. A helical transmembrane segment spans residues 32–52; sequence VFPHPQDTLMAVPLALALVVV. The tract at residues 67–128 is homeobox-like; the sequence is WLGVRNQIRR…RRRRNQDRPC (62 aa). The 202-residue stretch at 131-332 folds into the TLC domain; the sequence is KKFCESSWKF…ILCMIYSFIK (202 aa). A run of 4 helical transmembrane segments spans residues 140 to 160, 179 to 199, 209 to 229, and 260 to 280; these read FVFYLCCFVCGTMVLYHESWL, LYHWYLLELSFYISLLMTLPF, QVIHHFVTIILISFSYSLNLL, and MCDTLFIIFSLVFFYTRLVLF. The Last loop motif signature appears at 291–301; the sequence is ESIGNFSPFFG. The chain crosses the membrane as a helical span at residues 304 to 324; that stretch reads FLNILLVILQLLHVFWSWLIL. At 325-393 the chain is on the cytoplasmic side; that stretch reads CMIYSFIKKG…RMVNRHTPAT (69 aa). 3 positions are modified to phosphoserine: Ser-342, Ser-349, and Ser-350. Residues 346-356 are compositionally biased toward acidic residues; that stretch reads ELDSSDGEAAE. A disordered region spans residues 346–393; the sequence is ELDSSDGEAAEECPQMKNGAAQRPGAAPTDGPRSRAAGRMVNRHTPAT.

Post-translationally, phosphorylated at the C-terminus by CK2.

The protein resides in the endoplasmic reticulum membrane. The enzyme catalyses sphinganine + octadecanoyl-CoA = N-(octadecanoyl)-sphinganine + CoA + H(+). The catalysed reaction is eicosanoyl-CoA + sphinganine = N-eicosanoylsphinganine + CoA + H(+). It carries out the reaction docosanoyl-CoA + sphinganine = N-docosanoylsphinganine + CoA + H(+). It catalyses the reaction tetracosanoyl-CoA + sphinganine = N-tetracosanoylsphinganine + CoA + H(+). The enzyme catalyses hexacosanoyl-CoA + sphinganine = N-hexacosanoylsphinganine + CoA + H(+). The catalysed reaction is a fatty acyl-CoA + sphing-4-enine = an N-acylsphing-4-enine + CoA + H(+). It carries out the reaction sphing-4-enine + octadecanoyl-CoA = N-octadecanoylsphing-4-enine + CoA + H(+). It catalyses the reaction hexadecasphinganine + octadecanoyl-CoA = N-octadecanoylhexadecasphinganine + CoA + H(+). The protein operates within lipid metabolism; sphingolipid metabolism. Ceramide synthase that catalyzes formation of ceramide from sphinganine and acyl-CoA substrates, with high selectivity toward long and very-long chains (C18:0-C22:0) as acyl donor. This is Ceramide synthase 4 from Bos taurus (Bovine).